Here is a 112-residue protein sequence, read N- to C-terminus: Hydrogenase maturation factor HypA (112 aa).

Residue His2 coordinates Ni(2+). Cys72, Cys75, Cys88, and Cys91 together coordinate Zn(2+).

It belongs to the HypA/HybF family.

Involved in the maturation of [NiFe] hydrogenases. Required for nickel insertion into the metal center of the hydrogenase. The polypeptide is Hydrogenase maturation factor HypA (Francisella philomiragia subsp. philomiragia (strain ATCC 25017 / CCUG 19701 / FSC 153 / O#319-036)).